The sequence spans 606 residues: Replication protein E1 (606 aa).

The Nuclear localization signal signature appears at 76–78 (KRK). Ser-81 and Ser-89 each carry phosphoserine; by host. Positions 144-307 (GTGDVDIDYL…TVLGHQNAEA (164 aa)) are DNA-binding region. The 151-residue stretch at 406-556 (VNFIMFLAAL…FPMKSDNTPQ (151 aa)) folds into the SF3 helicase domain. Residue 432–439 (GPPNSGKS) participates in ATP binding. Residue Lys-513 forms a Glycyl lysine isopeptide (Lys-Gly) (interchain with G-Cter in SUMO) linkage. The tract at residues 581–606 (EEEEEGEHGETQRAFQCSARSANEHI) is disordered. Residues 593 to 606 (RAFQCSARSANEHI) show a composition bias toward polar residues.

This sequence belongs to the papillomaviridae E1 protein family. Can form hexamers. Interacts with E2 protein; this interaction increases E1 DNA binding specificity. Interacts with host DNA polymerase subunit POLA2. Interacts with host single stranded DNA-binding protein RPA1. Interacts with host TOP1; this interaction stimulates the enzymatic activity of TOP1. Post-translationally, phosphorylated. Sumoylated.

The protein localises to the host nucleus. It catalyses the reaction Couples ATP hydrolysis with the unwinding of duplex DNA by translocating in the 3'-5' direction.. The catalysed reaction is ATP + H2O = ADP + phosphate + H(+). Its function is as follows. ATP-dependent DNA 3'-5' helicase required for initiation of viral DNA replication. It forms a complex with the viral E2 protein. The E1-E2 complex binds to the replication origin which contains binding sites for both proteins. During the initial step, a dimer of E1 interacts with a dimer of protein E2 leading to a complex that binds the viral origin of replication with high specificity. Then, a second dimer of E1 displaces the E2 dimer in an ATP-dependent manner to form the E1 tetramer. Following this, two E1 monomers are added to each half of the site, which results in the formation of two E1 trimers on the viral ori. Subsequently, two hexamers will be created. The double hexamer acts as a bi-directional helicase machinery and unwinds the viral DNA and then recruits the host DNA polymerase to start replication. The sequence is that of Replication protein E1 from Human papillomavirus type RTRX7.